Here is a 286-residue protein sequence, read N- to C-terminus: Pantothenate synthetase (286 aa).

An ATP-binding site is contributed by 30–37 (MGALHEGH). Histidine 37 functions as the Proton donor in the catalytic mechanism. Glutamine 61 is a binding site for (R)-pantoate. Position 61 (glutamine 61) interacts with beta-alanine. 147-150 (GEKD) contacts ATP. Glutamine 153 serves as a coordination point for (R)-pantoate. Residues valine 180 and 188–191 (LSSR) each bind ATP.

It belongs to the pantothenate synthetase family. Homodimer.

The protein localises to the cytoplasm. The catalysed reaction is (R)-pantoate + beta-alanine + ATP = (R)-pantothenate + AMP + diphosphate + H(+). It functions in the pathway cofactor biosynthesis; (R)-pantothenate biosynthesis; (R)-pantothenate from (R)-pantoate and beta-alanine: step 1/1. In terms of biological role, catalyzes the condensation of pantoate with beta-alanine in an ATP-dependent reaction via a pantoyl-adenylate intermediate. The protein is Pantothenate synthetase of Novosphingobium aromaticivorans (strain ATCC 700278 / DSM 12444 / CCUG 56034 / CIP 105152 / NBRC 16084 / F199).